Consider the following 424-residue polypeptide: Double-stranded RNA-binding protein 8 (424 aa).

A compositionally biased stretch (pro residues) spans 1–10; the sequence is MDMPPTPLPP. The interval 1-22 is disordered; sequence MDMPPTPLPPETANTSPAPNGA. DRBM domains lie at 33–102 and 118–185; these read VFKS…EIVK and LCKN…AIQG. Basic and acidic residues-rich tracts occupy residues 287-308 and 318-328; these read KRVE…ENQH and DEARVEQEPSR. Residues 287–330 form a disordered region; it reads KRVEAEPPRDIEMVQPDKENQHSDAALVQPDDEARVEQEPSRDI.

In terms of biological role, binds double-stranded RNA. This Oryza sativa subsp. japonica (Rice) protein is Double-stranded RNA-binding protein 8 (DRB8).